The sequence spans 65 residues: uncharacterized protein (65 aa).

Residues Met1–Ser16 form the signal peptide.

This is an uncharacterized protein from Saccharomyces cerevisiae (strain ATCC 204508 / S288c) (Baker's yeast).